A 433-amino-acid polypeptide reads, in one-letter code: 23S rRNA (uracil(1939)-C(5))-methyltransferase RlmD (433 aa).

Residues 10 to 68 (RTTTRQIITVSVNDLDSFGQGVARHNGKTLFIPGLLSQENAEVTVTEDKKQYARAKVVR) enclose the TRAM domain. Residues Cys-81, Cys-87, Cys-90, and Cys-162 each contribute to the [4Fe-4S] cluster site. Gln-265, Phe-294, Asn-299, Glu-315, Asn-342, and Asp-363 together coordinate S-adenosyl-L-methionine. The active-site Nucleophile is the Cys-389.

The protein belongs to the class I-like SAM-binding methyltransferase superfamily. RNA M5U methyltransferase family. RlmD subfamily.

It catalyses the reaction uridine(1939) in 23S rRNA + S-adenosyl-L-methionine = 5-methyluridine(1939) in 23S rRNA + S-adenosyl-L-homocysteine + H(+). In terms of biological role, catalyzes the formation of 5-methyl-uridine at position 1939 (m5U1939) in 23S rRNA. The polypeptide is 23S rRNA (uracil(1939)-C(5))-methyltransferase RlmD (Shigella dysenteriae serotype 1 (strain Sd197)).